The primary structure comprises 313 residues: Ankyrin repeat family A protein 2 (313 aa).

ANK repeat units follow at residues 148-180, 181-213, 214-246, 247-279, and 280-313; these read ANSL…HTDE, EGFT…LLGK, GRES…EYDW, NGGT…IETD, and SGYN…NIKE.

In terms of assembly, interacts (via ANK repeats) with CCDC8 (via PxLPxI/L motif); mediates the interaction with the 3M complex which is composed of CCDC8, CUL7 and OBSL1. Interacts (via ANK repeats) with HDAC4 (via PxLPxI/L motif). Interacts (via ANK repeats) with HDAC5 (via PxLPxI/L motif). Interacts (via ANK repeats) with LRP2/megalin (via PxLPxI/L motif). Interacts (via ANK repeats) with RFX7 (via PxLPxI/L motif). Interacts with AHRR. Interacts with NEK6.

Its subcellular location is the cytoplasm. It is found in the cytoskeleton. The protein resides in the membrane. Functionally, may regulate the interaction between the 3M complex and the histone deacetylases HDAC4 and HDAC5. May also regulate LRP2/megalin. This is Ankyrin repeat family A protein 2 (ANKRA2) from Homo sapiens (Human).